The chain runs to 286 residues: CCR4-NOT transcription complex subunit 7 (286 aa).

Residues aspartate 40, glutamate 42, aspartate 161, aspartate 230, and glutamate 278 each contribute to the a divalent metal cation site.

This sequence belongs to the CAF1 family. Component of the CCR4-NOT complex. Mn(2+) is required as a cofactor. Requires Mg(2+) as cofactor. The cofactor is Co(2+).

The protein localises to the nucleus. It localises to the cytoplasm. The catalysed reaction is Exonucleolytic cleavage of poly(A) to 5'-AMP.. Functionally, has 3'-5' poly(A) exoribonuclease activity for synthetic poly(A) RNA substrate. Catalytic component of the CCR4-NOT complex which is one of the major cellular mRNA deadenylases and is linked to various cellular processes including bulk mRNA degradation, miRNA-mediated repression, translational repression during translational initiation and general transcription regulation. During miRNA-mediated repression the complex also seems to act as translational repressor during translational initiation. Additional complex functions may be a consequence of its influence on mRNA expression. The sequence is that of CCR4-NOT transcription complex subunit 7 (cnot7) from Danio rerio (Zebrafish).